A 156-amino-acid polypeptide reads, in one-letter code: Small ribosomal subunit protein uS7 (156 aa).

This sequence belongs to the universal ribosomal protein uS7 family. In terms of assembly, part of the 30S ribosomal subunit. Contacts proteins S9 and S11.

Functionally, one of the primary rRNA binding proteins, it binds directly to 16S rRNA where it nucleates assembly of the head domain of the 30S subunit. Is located at the subunit interface close to the decoding center, probably blocks exit of the E-site tRNA. The sequence is that of Small ribosomal subunit protein uS7 from Parvibaculum lavamentivorans (strain DS-1 / DSM 13023 / NCIMB 13966).